A 213-amino-acid chain; its full sequence is Imidazole glycerol phosphate synthase subunit HisH (213 aa).

One can recognise a Glutamine amidotransferase type-1 domain in the interval 4–213 (SIAIVDYGMG…LYRNFVHWKP (210 aa)). The active-site Nucleophile is Cys83. Active-site residues include His193 and Glu195.

As to quaternary structure, heterodimer of HisH and HisF.

The protein resides in the cytoplasm. The catalysed reaction is 5-[(5-phospho-1-deoxy-D-ribulos-1-ylimino)methylamino]-1-(5-phospho-beta-D-ribosyl)imidazole-4-carboxamide + L-glutamine = D-erythro-1-(imidazol-4-yl)glycerol 3-phosphate + 5-amino-1-(5-phospho-beta-D-ribosyl)imidazole-4-carboxamide + L-glutamate + H(+). It carries out the reaction L-glutamine + H2O = L-glutamate + NH4(+). It participates in amino-acid biosynthesis; L-histidine biosynthesis; L-histidine from 5-phospho-alpha-D-ribose 1-diphosphate: step 5/9. IGPS catalyzes the conversion of PRFAR and glutamine to IGP, AICAR and glutamate. The HisH subunit catalyzes the hydrolysis of glutamine to glutamate and ammonia as part of the synthesis of IGP and AICAR. The resulting ammonia molecule is channeled to the active site of HisF. The sequence is that of Imidazole glycerol phosphate synthase subunit HisH from Burkholderia multivorans (strain ATCC 17616 / 249).